The primary structure comprises 572 residues: Hemagglutinin-neuraminidase (572 aa).

Over 1 to 31 (MEYWKHTNHRKDAGNELETSMATHGNKLTNK) the chain is Intravirion. A helical transmembrane segment spans residues 32-52 (ITYILWTIILVLLSIVLIIVL). Residues 53–572 (INSIKSEKAH…FKTEVPKSCS (520 aa)) are Virion surface-facing. 2 disulfides stabilise this stretch: cysteine 190–cysteine 214 and cysteine 256–cysteine 269. Positions 252 to 257 (NRKSCS) are involved in neuraminidase activity. N-linked (GlcNAc...) asparagine; by host glycosylation is found at asparagine 308 and asparagine 351. Disulfide bonds link cysteine 355/cysteine 469 and cysteine 463/cysteine 473. Asparagine 523 is a glycosylation site (N-linked (GlcNAc...) asparagine; by host). Cysteine 535 and cysteine 544 form a disulfide bridge.

This sequence belongs to the paramyxoviruses hemagglutinin-neuraminidase family. In terms of assembly, homotetramer; composed of disulfide-linked homodimers. Interacts with F protein trimer.

Its subcellular location is the virion membrane. It localises to the host cell membrane. The catalysed reaction is Hydrolysis of alpha-(2-&gt;3)-, alpha-(2-&gt;6)-, alpha-(2-&gt;8)- glycosidic linkages of terminal sialic acid residues in oligosaccharides, glycoproteins, glycolipids, colominic acid and synthetic substrates.. Its function is as follows. Attaches the virus to sialic acid-containing cell receptors and thereby initiating infection. Binding of HN protein to the receptor induces a conformational change that allows the F protein to trigger virion/cell membranes fusion. Functionally, neuraminidase activity ensures the efficient spread of the virus by dissociating the mature virions from the neuraminic acid containing glycoproteins. The chain is Hemagglutinin-neuraminidase (HN) from Human parainfluenza 3 virus (strain Tex/9305/82) (HPIV-3).